The chain runs to 568 residues: Light-independent protochlorophyllide reductase subunit B (568 aa).

Residue D36 coordinates [4Fe-4S] cluster. D293 (proton donor) is an active-site residue. 437-438 (GM) contributes to the substrate binding site. The tract at residues 476 to 517 (ANGHPEAGVSVGAAEPSAAPSRSVVTEESNRATTPSSSTVHP) is disordered. Positions 498-515 (SVVTEESNRATTPSSSTV) are enriched in polar residues.

This sequence belongs to the ChlB/BchB/BchZ family. As to quaternary structure, protochlorophyllide reductase is composed of three subunits; BchL, BchN and BchB. Forms a heterotetramer of two BchB and two BchN subunits. Requires [4Fe-4S] cluster as cofactor.

The enzyme catalyses chlorophyllide a + oxidized 2[4Fe-4S]-[ferredoxin] + 2 ADP + 2 phosphate = protochlorophyllide a + reduced 2[4Fe-4S]-[ferredoxin] + 2 ATP + 2 H2O. Its pathway is porphyrin-containing compound metabolism; bacteriochlorophyll biosynthesis (light-independent). Functionally, component of the dark-operative protochlorophyllide reductase (DPOR) that uses Mg-ATP and reduced ferredoxin to reduce ring D of protochlorophyllide (Pchlide) to form chlorophyllide a (Chlide). This reaction is light-independent. The NB-protein (BchN-BchB) is the catalytic component of the complex. This is Light-independent protochlorophyllide reductase subunit B from Roseiflexus sp. (strain RS-1).